The primary structure comprises 636 residues: Basic helix-loop-helix ARNT-like protein 2 (636 aa).

A disordered region spans residues 25-62 (VSSRVSPGTRPTAMGSFSSHMTEFPRKRKGSDSDPSQS). Positions 46-258 (TEFPRKRKGS…SPREKLIDAK (213 aa)) are interaction with PER2. The Nuclear localization signal signature appears at 49-54 (PRKRKG). Residues 107–160 (AFREAHSQTEKRRRDKMNNLIEELSAMIPQCNPMARKLDKLTVLRMAVQHLRSL) form the bHLH domain. The Nuclear export signal 1 motif lies at 177-187 (LQDNELRHLIL). Residues 178-250 (QDNELRHLIL…EQLSSFDISP (73 aa)) enclose the PAS 1 domain. A Glycyl lysine isopeptide (Lys-Gly) (interchain with G-Cter in SUMO2 and SUMO3) cross-link involves residue Lys-287. Lys-294 is covalently cross-linked (Glycyl lysine isopeptide (Lys-Gly) (interchain with G-Cter in SUMO2)). A PAS 2 domain is found at 357–427 (VPQNSGEINV…DKHKAVLQSK (71 aa)). A Nuclear export signal 2 motif is present at residues 392–400 (LGYLPQELL). The 44-residue stretch at 432-475 (TDSYKFRAKDGSFVTLKSQWFSFTNPWTKELEYIVSVNTLVLGH) folds into the PAC domain.

As to quaternary structure, component of the circadian core oscillator, which includes the CRY proteins, CLOCK, or NPAS2, BMAL1 or BMAL2, CSNK1D and/or CSNK1E, TIMELESS and the PER proteins. Interacts directly with CLOCK to form the BMAL2-CLOCK transactivator. Can form heterodimers or homodimers which interact directly with CLOCK to form the transcription activator. Interacts with NPAS2 and HIF1A. Interacts with PER2. Expressed in fetal brain. Highly expressed in brain and placenta. Lower levels in heart, liver, thymus, kidney and lung. Located to endothelial cells and neuronal cells of the suprachiasmatic nucleus (SCN). Also detected in endothelial cells of the heart, lung and kidney. In the brain, specifically expressed in the thalamus, hippocampus and amygdala.

The protein resides in the nucleus. Its function is as follows. Transcriptional activator which forms a core component of the circadian clock. The circadian clock, an internal time-keeping system, regulates various physiological processes through the generation of approximately 24 hour circadian rhythms in gene expression, which are translated into rhythms in metabolism and behavior. It is derived from the Latin roots 'circa' (about) and 'diem' (day) and acts as an important regulator of a wide array of physiological functions including metabolism, sleep, body temperature, blood pressure, endocrine, immune, cardiovascular, and renal function. Consists of two major components: the central clock, residing in the suprachiasmatic nucleus (SCN) of the brain, and the peripheral clocks that are present in nearly every tissue and organ system. Both the central and peripheral clocks can be reset by environmental cues, also known as Zeitgebers (German for 'timegivers'). The predominant Zeitgeber for the central clock is light, which is sensed by retina and signals directly to the SCN. The central clock entrains the peripheral clocks through neuronal and hormonal signals, body temperature and feeding-related cues, aligning all clocks with the external light/dark cycle. Circadian rhythms allow an organism to achieve temporal homeostasis with its environment at the molecular level by regulating gene expression to create a peak of protein expression once every 24 hours to control when a particular physiological process is most active with respect to the solar day. Transcription and translation of core clock components (CLOCK, NPAS2, BMAL1, BMAL2, PER1, PER2, PER3, CRY1 and CRY2) plays a critical role in rhythm generation, whereas delays imposed by post-translational modifications (PTMs) are important for determining the period (tau) of the rhythms (tau refers to the period of a rhythm and is the length, in time, of one complete cycle). A diurnal rhythm is synchronized with the day/night cycle, while the ultradian and infradian rhythms have a period shorter and longer than 24 hours, respectively. Disruptions in the circadian rhythms contribute to the pathology of cardiovascular diseases, cancer, metabolic syndromes and aging. A transcription/translation feedback loop (TTFL) forms the core of the molecular circadian clock mechanism. Transcription factors, CLOCK or NPAS2 and BMAL1 or BMAL2, form the positive limb of the feedback loop, act in the form of a heterodimer and activate the transcription of core clock genes and clock-controlled genes (involved in key metabolic processes), harboring E-box elements (5'-CACGTG-3') within their promoters. The core clock genes: PER1/2/3 and CRY1/2 which are transcriptional repressors form the negative limb of the feedback loop and interact with the CLOCK|NPAS2-BMAL1|BMAL2 heterodimer inhibiting its activity and thereby negatively regulating their own expression. This heterodimer also activates nuclear receptors NR1D1/2 and RORA/B/G, which form a second feedback loop and which activate and repress BMAL1 transcription, respectively. The CLOCK-BMAL2 heterodimer activates the transcription of SERPINE1/PAI1 and BHLHE40/DEC1. The chain is Basic helix-loop-helix ARNT-like protein 2 from Homo sapiens (Human).